Consider the following 357-residue polypeptide: Protein RecA (357 aa).

67–74 (GPESSGKT) serves as a coordination point for ATP. Positions 335 to 357 (LSSSASDDENSEGNVDFETGEVF) are disordered.

The protein belongs to the RecA family.

The protein localises to the cytoplasm. Can catalyze the hydrolysis of ATP in the presence of single-stranded DNA, the ATP-dependent uptake of single-stranded DNA by duplex DNA, and the ATP-dependent hybridization of homologous single-stranded DNAs. It interacts with LexA causing its activation and leading to its autocatalytic cleavage. The chain is Protein RecA from Shewanella sp. (strain MR-4).